A 385-amino-acid polypeptide reads, in one-letter code: HAT1-interacting factor 1 (385 aa).

Positions Gly80–Glu199 are important for interaction with heterotetrameric histone H3 and H4 and for interaction with dimeric histone H2A and H2B. Composition is skewed to low complexity over residues Asp85–Glu97 and Asp105–Gly116. The tract at residues Asp85–Glu163 is disordered. Over residues Asp129–Lys160 the composition is skewed to acidic residues. Residue Ser174 is modified to Phosphoserine. TPR repeat units follow at residues Val186–Pro220, Glu229–Ala262, and Ala289–Asp322. An interaction with dimeric histone H2A and H2B region spans residues Glu248–Gln332. Residues Val340–His385 are disordered. A compositionally biased stretch (polar residues) spans Glu342–Ile359.

The protein belongs to the NASP family. As to quaternary structure, homodimer. The homodimer interacts with a histone tetramer containing H3 and H4; the interaction is direct. The homodimer interacts with heterodimeric histone H2A and H2B; the interaction is direct. Component of the nuclear histone acetyltransferase B (HAT-B) complex composed of at least HAT1, HAT2 and HIF1. Does not interact with HAT1 in the absence of HAT2. Interacts with histones H3 and H4 in a HAT1/HAT2 dependent manner. Interaction with heterotetrameric histone H3 and H4 precludes interaction with dimeric histone H2A and H2B, irrespective of the fact that their binding involves non-identical regions of the protein.

Its subcellular location is the nucleus. Functionally, histone H3 and H4 specific chaperone component of the nuclear histone acetyltransferase B (HAT-B) complex. Involved in chromatin assembly and telomere silencing. This chain is HAT1-interacting factor 1 (HIF1), found in Saccharomyces cerevisiae (strain ATCC 204508 / S288c) (Baker's yeast).